Consider the following 500-residue polypeptide: LEM protein 2 (500 aa).

In terms of domain architecture, LEM spans 1–45; that stretch reads MVDVEKMSDAELRAELNVRGANVGPVTGTTRSLYEKKLKKLLSGG. Residues 1–325 lie on the Nuclear side of the membrane; it reads MVDVEKMSDA…VKQTNIFNEA (325 aa). The tract at residues 39-202 is disordered; sequence KKLLSGGAKT…RRITSVPGLI (164 aa). A compositionally biased stretch (low complexity) spans 46–57; the sequence is AKTPARPTVAKP. Residues 58–75 show a composition bias toward pro residues; it reads APKPTPKSAPAPKSPKSP. Low complexity predominate over residues 77–89; it reads ARRSIPRAAATAA. The span at 103–122 shows a compositional bias: acidic residues; it reads EEMSDSDDDMRDDDDDDEEI. Low complexity-rich tracts occupy residues 130–141 and 168–197; these read SSFRSANSTASS and NTPR…RITS. Residues 326–346 traverse the membrane as a helical segment; the sequence is IYFALYVILILFVVLGIAYAL. Topologically, residues 347 to 378 are perinuclear space; that stretch reads TTTHRPKTADFSGYWGVLKAAGRDSLNFFYNY. The chain crosses the membrane as a helical span at residues 379–399; sequence AILPVVSLGIFVVLGAGIYFG. Residues 400–500 are Nuclear-facing; the sequence is HRKYKEAKEQ…WIGNQSQKRW (101 aa).

In terms of assembly, interacts with lmn-1. Interacts (via LEM domain and the C-terminal nuclear domain) with baf-1. As to expression, ubiquitous. High expression in germline and intestine.

It is found in the nucleus inner membrane. It localises to the nucleus envelope. The protein resides in the chromosome. Nuclear lamina-associated inner nuclear membrane protein that is involved in cell division, nuclear structure organization, maintenance of nuclear envelope integrity and nuclear envelope reformation after mitosis. In interphase cells, plays a role in anchoring and spatial arrangement of chromosome arms at the nuclear periphery, forming so-called lem-2 subdomains. Both arms of autosomes but only the left arm of the X chromosome are anchored in lem-2 subdomains; sequences bound by lem-2 are mainly repetitive chromosome sequences and inactive genes. Involved in chromosome segregation and cell division, probably via its interaction with the nuclear intermediate filament protein lmn-1, the main component of nuclear lamina. Required to organize the distribution of lmn-1, nuclear pore complexes (NPCs) and chromatin in mitotically active cells. Involved in the nuclear positioning and efficient anchoring of microtubule-organizing centers (MTOCs) to the nuclear envelope during mitosis as well as on maintaining correct nuclear morphology. Contributes to closure of nuclear envelope (NE) holes and prevents excess nuclear membranes after meiosis and mitosis. Together with emr-1, plays a role in baf-1 enrichment at the nuclear envelope in anaphase. Together with emr-1, involved in muscle cell attachment to hypodermal cells, as well as muscle cell location and sarcomere organization. May play a role in radiation-induced DNA damage repair response. This chain is LEM protein 2 (lem-2), found in Caenorhabditis elegans.